Here is an 804-residue protein sequence, read N- to C-terminus: Probable exo-1,4-beta-xylosidase xlnD (804 aa).

The signal sequence occupies residues 1 to 26 (MAHSMSRPVAATAAALLALALPQALA). N-linked (GlcNAc...) asparagine glycans are attached at residues N29, N124, N148, N242, and N251. Residue D315 is part of the active site. N-linked (GlcNAc...) asparagine glycans are attached at residues N357, N390, N413, N444, N455, N573, N576, N665, N696, and N718.

This sequence belongs to the glycosyl hydrolase 3 family.

It localises to the secreted. The catalysed reaction is Hydrolysis of (1-&gt;4)-beta-D-xylans, to remove successive D-xylose residues from the non-reducing termini.. Its pathway is glycan degradation; xylan degradation. Its function is as follows. Xylan 1,4-beta-xylosidase involved in the hydrolysis of xylan, a major structural heterogeneous polysaccharide found in plant biomass representing the second most abundant polysaccharide in the biosphere, after cellulose. In Aspergillus niger (strain ATCC MYA-4892 / CBS 513.88 / FGSC A1513), this protein is Probable exo-1,4-beta-xylosidase xlnD (xlnD).